The following is a 230-amino-acid chain: Flagellar L-ring protein (230 aa).

The first 16 residues, 1-16, serve as a signal peptide directing secretion; that stretch reads MYLVFGIIFTSVIVTS. C17 is lipidated: N-palmitoyl cysteine. C17 is lipidated: S-diacylglycerol cysteine.

This sequence belongs to the FlgH family. The basal body constitutes a major portion of the flagellar organelle and consists of four rings (L,P,S, and M) mounted on a central rod.

The protein resides in the cell outer membrane. The protein localises to the bacterial flagellum basal body. Functionally, assembles around the rod to form the L-ring and probably protects the motor/basal body from shearing forces during rotation. The sequence is that of Flagellar L-ring protein from Bartonella bacilliformis (strain ATCC 35685 / KC583 / Herrer 020/F12,63).